The following is a 165-amino-acid chain: uncharacterized protein (165 aa).

The disordered stretch occupies residues 51–102 (KQAAVEPGARGGERPTGSQAGVTDTPDSAPFQRRSRAPRAREQAAQAGLNQK). Positions 66–76 (TGSQAGVTDTP) are enriched in polar residues.

This is an uncharacterized protein from Mus musculus (Mouse).